The primary structure comprises 107 residues: Protein Rev (107 aa).

Serine 5 bears the Phosphoserine; by host CK2 mark. Positions 18 to 26 (AIKILYQSN) are homomultimerization. 2 disordered regions span residues 24–48 (QSNPYPPPEGTRQARRNRRRRWRAR) and 82–107 (HLDCSEDSGTSGTQQPQGTETGVGRS). The Nuclear localization signal and RNA-binding (RRE) motif lies at 34 to 50 (TRQARRNRRRRWRARQR). Over residues 36-48 (QARRNRRRRWRAR) the composition is skewed to basic residues. The Nuclear export signal and binding to XPO1 motif lies at 73–84 (LQLPPLERLHLD). A compositionally biased stretch (polar residues) spans 88–101 (DSGTSGTQQPQGTE). Position 92 is a phosphoserine; by host (serine 92).

This sequence belongs to the HIV-1 REV protein family. In terms of assembly, homomultimer; when bound to the RRE. Multimeric assembly is essential for activity and may involve XPO1. Binds to human KPNB1, XPO1, TNPO1, RANBP5 and IPO7. Interacts with the viral Integrase. Interacts with human KHDRBS1. Interacts with human NAP1; this interaction decreases Rev multimerization and stimulates its activity. Interacts with human DEAD-box helicases DDX3 and DDX24; these interactions may serve for viral RNA export to the cytoplasm and packaging, respectively. Interacts with human PSIP1; this interaction may inhibit HIV-1 DNA integration by promoting dissociation of the Integrase-LEDGF/p75 complex. Asymmetrically arginine dimethylated at one site by host PRMT6. Methylation impairs the RNA-binding activity and export of viral RNA from the nucleus to the cytoplasm. Post-translationally, phosphorylated by protein kinase CK2. Presence of, and maybe binding to the N-terminus of the regulatory beta subunit of CK2 is necessary for CK2-mediated Rev's phosphorylation.

Its subcellular location is the host nucleus. The protein localises to the host nucleolus. The protein resides in the host cytoplasm. In terms of biological role, escorts unspliced or incompletely spliced viral pre-mRNAs (late transcripts) out of the nucleus of infected cells. These pre-mRNAs carry a recognition sequence called Rev responsive element (RRE) located in the env gene, that is not present in fully spliced viral mRNAs (early transcripts). This function is essential since most viral proteins are translated from unspliced or partially spliced pre-mRNAs which cannot exit the nucleus by the pathway used by fully processed cellular mRNAs. Rev itself is translated from a fully spliced mRNA that readily exits the nucleus. Rev's nuclear localization signal (NLS) binds directly to KPNB1/Importin beta-1 without previous binding to KPNA1/Importin alpha-1. KPNB1 binds to the GDP bound form of RAN (Ran-GDP) and targets Rev to the nucleus. In the nucleus, the conversion from Ran-GDP to Ran-GTP dissociates Rev from KPNB1 and allows Rev's binding to the RRE in viral pre-mRNAs. Rev multimerization on the RRE via cooperative assembly exposes its nuclear export signal (NES) to the surface. Rev can then form a complex with XPO1/CRM1 and Ran-GTP, leading to nuclear export of the complex. Conversion from Ran-GTP to Ran-GDP mediates dissociation of the Rev/RRE/XPO1/RAN complex, so that Rev can return to the nucleus for a subsequent round of export. Beside KPNB1, also seems to interact with TNPO1/Transportin-1, RANBP5/IPO5 and IPO7/RANBP7 for nuclear import. The nucleoporin-like HRB/RIP is an essential cofactor that probably indirectly interacts with Rev to release HIV RNAs from the perinuclear region to the cytoplasm. The sequence is that of Protein Rev from Human immunodeficiency virus type 1 group M subtype G (isolate SE6165) (HIV-1).